Reading from the N-terminus, the 227-residue chain is Translation initiation factor 6 (227 aa).

Belongs to the eIF-6 family.

Its function is as follows. Binds to the 50S ribosomal subunit and prevents its association with the 30S ribosomal subunit to form the 70S initiation complex. This chain is Translation initiation factor 6, found in Pyrococcus horikoshii (strain ATCC 700860 / DSM 12428 / JCM 9974 / NBRC 100139 / OT-3).